The sequence spans 678 residues: MSHKINSKPFILHSEFKPSGDQPQAIEILAENLNDGLAHQTLLGVTGSGKTFTIANVIAKLNRPAMLLAPNKTLAAQLYAEMKAFFPENAVEYFVSYYDYYQPEAYVPSSDTFIEKDASINDQIEQMRLSATKSFLERRDTIVVASVSAIYGLGDPDSYLKMMLHLQTGAIIDQRQILVRLAELQYTRNDQAFQRGTFRVRGEIIDIFPAESDDRAVRIELFDDEIERLSLFDPLTGTGFGAVPRFTVYPKTHYVTPREQILDAIEKIKSELADRREYFIKENKLLEEQRITQRTQFDIEMMNELGYCSGIENYSRYLSGRNEGEPPPTLFDYMPSDALLVIDESHVTVPQIGGMYRGDRSRKETLVEYGFRLPSALDNRPLRFEEFERLAPQTIYVSATPGPYELEKSGTEIIDQVVRPTGLLDPEIEIRPVSIQVDDLLSEARQRADRNERVLVTTLTKRMAEDLTDYLDEHGIRVRYLHSDIDTVERVEIIRDLRLGEFDVLVGINLLREGLDIPEVSLVAILDADKEGFLRSERSLIQTIGRAARNLKGKAILYADRITNSMEKAITETNRRREKQMKYNEEHGITPQGLNKKVGELLDIGQGGSNKSRNKPRSQKAAEPATTYAIPMTAKEYQQQIKKLEQQMYKFAQDLEFEKAAAIRDQLHKLREQFVENG.

The Helicase ATP-binding domain occupies 31 to 417; sequence ENLNDGLAHQ…KSGTEIIDQV (387 aa). Position 44 to 51 (44 to 51) interacts with ATP; it reads GVTGSGKT. Positions 97 to 120 match the Beta-hairpin motif; that stretch reads YYDYYQPEAYVPSSDTFIEKDASI. Positions 436-602 constitute a Helicase C-terminal domain; it reads QVDDLLSEAR…GLNKKVGELL (167 aa). The interval 603–625 is disordered; it reads DIGQGGSNKSRNKPRSQKAAEPA. Positions 638 to 673 constitute a UVR domain; it reads QQQIKKLEQQMYKFAQDLEFEKAAAIRDQLHKLREQ.

This sequence belongs to the UvrB family. Forms a heterotetramer with UvrA during the search for lesions. Interacts with UvrC in an incision complex.

Its subcellular location is the cytoplasm. In terms of biological role, the UvrABC repair system catalyzes the recognition and processing of DNA lesions. A damage recognition complex composed of 2 UvrA and 2 UvrB subunits scans DNA for abnormalities. Upon binding of the UvrA(2)B(2) complex to a putative damaged site, the DNA wraps around one UvrB monomer. DNA wrap is dependent on ATP binding by UvrB and probably causes local melting of the DNA helix, facilitating insertion of UvrB beta-hairpin between the DNA strands. Then UvrB probes one DNA strand for the presence of a lesion. If a lesion is found the UvrA subunits dissociate and the UvrB-DNA preincision complex is formed. This complex is subsequently bound by UvrC and the second UvrB is released. If no lesion is found, the DNA wraps around the other UvrB subunit that will check the other stand for damage. The chain is UvrABC system protein B from Mannheimia succiniciproducens (strain KCTC 0769BP / MBEL55E).